Consider the following 350-residue polypeptide: Homeobox-leucine zipper protein HOX5 (350 aa).

A DNA-binding region (homeobox) is located at residues 83–142 (APEKKRRLTAEQVQMLERSFEEENKLEPERKTELARRLGMAPRQVAVWFQNRRARWKTKQ). The segment at 141–185 (KQLEHDFDRLKAAYDALAADHHALLSDNDRLRAQVISLTEKLQDK) is leucine-zipper. A disordered region spans residues 180–254 (EKLQDKETSP…TNDDGDGGGA (75 aa)). A compositionally biased stretch (low complexity) spans 188–198 (SPSSATITTAA).

This sequence belongs to the HD-ZIP homeobox family. Class I subfamily. Homodimer. May form a heterodimer with HOX4. Expressed in seedlings, roots, leaves, nodes, internodes, flowers and embryo.

It localises to the nucleus. Functionally, probable transcription activator that binds to the DNA sequence 5'-CAAT[AT]ATTG-3'. This Oryza sativa subsp. indica (Rice) protein is Homeobox-leucine zipper protein HOX5 (HOX5).